Consider the following 311-residue polypeptide: Methionyl-tRNA formyltransferase (311 aa).

Residue 111–114 (SLLP) participates in (6S)-5,6,7,8-tetrahydrofolate binding.

The protein belongs to the Fmt family.

The catalysed reaction is L-methionyl-tRNA(fMet) + (6R)-10-formyltetrahydrofolate = N-formyl-L-methionyl-tRNA(fMet) + (6S)-5,6,7,8-tetrahydrofolate + H(+). In terms of biological role, attaches a formyl group to the free amino group of methionyl-tRNA(fMet). The formyl group appears to play a dual role in the initiator identity of N-formylmethionyl-tRNA by promoting its recognition by IF2 and preventing the misappropriation of this tRNA by the elongation apparatus. This is Methionyl-tRNA formyltransferase from Caldicellulosiruptor saccharolyticus (strain ATCC 43494 / DSM 8903 / Tp8T 6331).